The sequence spans 849 residues: Putative respiratory burst oxidase homolog protein G (849 aa).

Residues 1 to 17 (MQRVSFEVKDTEAEKSS) show a composition bias toward basic and acidic residues. The disordered stretch occupies residues 1 to 53 (MQRVSFEVKDTEAEKSSSEILSGSLPSTYRNPAMENVGNAVDDGSSVKNNPKL). Residues 1–303 (MQRVSFEVKD…RFFVLDSWQR (303 aa)) lie on the Cytoplasmic side of the membrane. Residues 18 to 27 (SEILSGSLPS) show a composition bias toward low complexity. EF-hand-like regions lie at residues 118–128 (TANTDGLLLRS) and 153–164 (SHLKGDVITETE). 2 consecutive EF-hand domains span residues 176–211 (SFDS…SSSA) and 220–255 (KADE…AETK). D189, D191, D193, R195, and E200 together coordinate Ca(2+). At S270 the chain carries Phosphoserine. A helical transmembrane segment spans residues 304–324 (VWVIALWLTIMAILFAYKYIQ). At 325–392 (YKNRAVYEVL…LNFHKVIAVG (68 aa)) the chain is on the extracellular side. One can recognise a Ferric oxidoreductase domain in the interval 342–502 (KGAAETLKLN…LFVIVYILLV (161 aa)). Residues 393–409 (IAIGVAIHSVSHLACDF) traverse the membrane as a helical segment. Over 410–444 (PLLIAATPAEYMPLGKFFGEEQPKRYLHFVKSTEG) the chain is Cytoplasmic. The chain crosses the membrane as a helical span at residues 445 to 465 (ITGLVMVFLMVIAFTLAMPWF). At 466–489 (RRGKLEKKLPGPLKKLASFNAFWY) the chain is on the extracellular side. Residues 490–510 (THHLFVIVYILLVLHGYYIYL) traverse the membrane as a helical segment. The Cytoplasmic portion of the chain corresponds to 511-518 (NKEWYKKT). Residues 519-536 (TWMYLAVPVALYAYERLI) traverse the membrane as a helical segment. Residues 537–659 (RAFRSSIRTV…PYGAPAQDYK (123 aa)) are Extracellular-facing. The region spanning 541–657 (SSIRTVKVLK…DGPYGAPAQD (117 aa)) is the FAD-binding FR-type domain. A helical transmembrane segment spans residues 660-680 (KYEVVLLIGLGIGATPMISII). Residues 681–849 (KDIINNTETK…TRFSFHKENF (169 aa)) lie on the Cytoplasmic side of the membrane.

It belongs to the RBOH (TC 5.B.1.3) family. As to quaternary structure, monomer and homodimer.

The protein localises to the membrane. Its function is as follows. Calcium-dependent NADPH oxidase that generates superoxide. The chain is Putative respiratory burst oxidase homolog protein G (RBOHG) from Arabidopsis thaliana (Mouse-ear cress).